The chain runs to 173 residues: Ribosome maturation factor RimM (173 aa).

In terms of domain architecture, PRC barrel spans 95–169 (PDEFYDHELE…TIVIDPPEGL (75 aa)).

It belongs to the RimM family. In terms of assembly, binds ribosomal protein uS19.

Its subcellular location is the cytoplasm. Its function is as follows. An accessory protein needed during the final step in the assembly of 30S ribosomal subunit, possibly for assembly of the head region. Essential for efficient processing of 16S rRNA. May be needed both before and after RbfA during the maturation of 16S rRNA. It has affinity for free ribosomal 30S subunits but not for 70S ribosomes. The polypeptide is Ribosome maturation factor RimM (Mycolicibacterium smegmatis (strain ATCC 700084 / mc(2)155) (Mycobacterium smegmatis)).